Here is a 354-residue protein sequence, read N- to C-terminus: MRNHQDPIETDAVIVGAGPVGLFQVFELGLLEIKAHVVDSLAYPGGQCIELYPDKPIYDIPAVPVCTGRELTQNLLKQIAPFGATFHYGQEVTVVEKQSDGRFFVETSKGTRFLSKTIFIAAGVGAFQPRTLKVDGLEVFEDSQLFYRVRNPADFADKNLVIVGGGDSALDWALDFVKDGPNKAASVILIHRRDGFKAAPASVAKMRELCDALEMQFIVGQVTGFEAQDSLLTGIKVTGADGVTRVVPLDVLLVFFGLSPKLGPIAEWGLDIERKQLKVDTEKFSTSEPGIFAVGDINIYPGKKKLILSGFHECALAAFGAMPIISPEKKVFLQYTTTSPKLHKVLGVESPVFD.

The FAD site is built by aspartate 39, glutamine 47, tyrosine 52, valine 92, phenylalanine 127, aspartate 296, and threonine 337.

The protein belongs to the ferredoxin--NADP reductase type 2 family. In terms of assembly, homodimer. FAD is required as a cofactor.

The catalysed reaction is 2 reduced [2Fe-2S]-[ferredoxin] + NADP(+) + H(+) = 2 oxidized [2Fe-2S]-[ferredoxin] + NADPH. The chain is Ferredoxin--NADP reductase from Albidiferax ferrireducens (strain ATCC BAA-621 / DSM 15236 / T118) (Rhodoferax ferrireducens).